Consider the following 295-residue polypeptide: UDP-N-acetylenolpyruvoylglucosamine reductase (295 aa).

Positions 24 to 188 constitute an FAD-binding PCMH-type domain; the sequence is KVGGNAEIFF…LKAVFKVNKG (165 aa). Arg168 is an active-site residue. Ser217 (proton donor) is an active-site residue. Glu287 is a catalytic residue.

Belongs to the MurB family. FAD is required as a cofactor.

It is found in the cytoplasm. The catalysed reaction is UDP-N-acetyl-alpha-D-muramate + NADP(+) = UDP-N-acetyl-3-O-(1-carboxyvinyl)-alpha-D-glucosamine + NADPH + H(+). Its pathway is cell wall biogenesis; peptidoglycan biosynthesis. Its function is as follows. Cell wall formation. This Rickettsia felis (strain ATCC VR-1525 / URRWXCal2) (Rickettsia azadi) protein is UDP-N-acetylenolpyruvoylglucosamine reductase.